Consider the following 379-residue polypeptide: Chaperone protein DnaJ (379 aa).

A J domain is found at 5 to 69 (EYYERLGVDK…QKRAAYDQYG (65 aa)). Residues 141–223 (GVEKQVKYNR…CHGSGHEKVA (83 aa)) form a CR-type zinc finger. Zn(2+)-binding residues include C154, C157, C171, C174, C197, C200, C211, and C214. 4 CXXCXGXG motif repeats span residues 154 to 161 (CHTCDGSG), 171 to 178 (CHKCGGRG), 197 to 204 (CDVCHGTG), and 211 to 218 (CTTCHGSG).

It belongs to the DnaJ family. In terms of assembly, homodimer. The cofactor is Zn(2+).

The protein localises to the cytoplasm. Participates actively in the response to hyperosmotic and heat shock by preventing the aggregation of stress-denatured proteins and by disaggregating proteins, also in an autonomous, DnaK-independent fashion. Unfolded proteins bind initially to DnaJ; upon interaction with the DnaJ-bound protein, DnaK hydrolyzes its bound ATP, resulting in the formation of a stable complex. GrpE releases ADP from DnaK; ATP binding to DnaK triggers the release of the substrate protein, thus completing the reaction cycle. Several rounds of ATP-dependent interactions between DnaJ, DnaK and GrpE are required for fully efficient folding. Also involved, together with DnaK and GrpE, in the DNA replication of plasmids through activation of initiation proteins. The polypeptide is Chaperone protein DnaJ (Lactococcus lactis subsp. cremoris (strain SK11)).